Reading from the N-terminus, the 459-residue chain is MDQSKRYVNLALSEADLIKGGRHVLCAYRMRPRPGHGYVETAAHFAAESSTGTNVEVCTTDDFTRGVDALVYEVDEAEGLMKIAYPVDLFDRNIIDGKAMIASFLTLTVGNNQGMSDVENAKMEDFYVPPEFLKLFDGPACNISHMWKVLGRPEVNGGMVVGTIIKPKLGLRPKPFADACHQFWLGGDFIKNDEPQGNQVFAPLKETMRLVADAMRRAQDETGVPKLLSANITADDPAEMIARGNFILETFGENASHVAFLVDGFVAGPTAVTTCRRNFPDTFLHYHRAGHGAITSRQSKRGYTVLVHMKMARLLGASGIHTGTMGYGKMEGAPDEKMVAYMLERQIAEGPYYRQDWGGMASCTPIISGGMSALRLPGFFDNLGHSNVIQTSGGGAFGHKDGAIAGALSLRQAHEAWLKKIDLVDYAQTHAELRGAFESFASDADRLYPGWRDRLRIAA.

Asn-111 provides a ligand contact to substrate. The active-site Proton acceptor is the Lys-166. Lys-168 contributes to the substrate binding site. Mg(2+)-binding residues include Lys-191, Asp-193, and Glu-194. Lys-191 carries the post-translational modification N6-carboxylysine. His-287 functions as the Proton acceptor in the catalytic mechanism. Substrate is bound by residues Arg-288, His-321, and Ser-368.

It belongs to the RuBisCO large chain family. Type II subfamily. As to quaternary structure, homodimer. Requires Mg(2+) as cofactor.

It catalyses the reaction 2 (2R)-3-phosphoglycerate + 2 H(+) = D-ribulose 1,5-bisphosphate + CO2 + H2O. The catalysed reaction is D-ribulose 1,5-bisphosphate + O2 = 2-phosphoglycolate + (2R)-3-phosphoglycerate + 2 H(+). Its function is as follows. RuBisCO catalyzes two reactions: the carboxylation of D-ribulose 1,5-bisphosphate, the primary event in carbon dioxide fixation, as well as the oxidative fragmentation of the pentose substrate. Both reactions occur simultaneously and in competition at the same active site. The chain is Ribulose bisphosphate carboxylase from Paramagnetospirillum magnetotacticum (Aquaspirillum magnetotacticum).